The following is a 152-amino-acid chain: UPF0756 membrane protein PEPE_1090 (152 aa).

The next 4 helical transmembrane spans lie at 4-24 (WLFL…SLII), 52-72 (WGVT…KIGF), 85-105 (WIAV…VGFL), and 115-135 (LVMG…GPII).

It belongs to the UPF0756 family.

Its subcellular location is the cell membrane. The sequence is that of UPF0756 membrane protein PEPE_1090 from Pediococcus pentosaceus (strain ATCC 25745 / CCUG 21536 / LMG 10740 / 183-1w).